The primary structure comprises 740 residues: NAD(P)H-quinone oxidoreductase subunit 5, chloroplastic (740 aa).

Helical transmembrane passes span 9-29 (WIIP…LFLF), 40-60 (WAFQ…YLSI), 89-109 (IDPL…MVLI), 125-145 (FAYM…SNLI), 147-167 (IYIF…FWFT), 185-205 (GDFG…SFEF), 219-239 (NEVD…GAVA), 258-278 (TPIS…FLVA), 286-306 (VIPY…LLGA), 327-347 (LGYM…FHLI), 354-374 (ALLF…VGYS), 396-416 (ITFL…CFWS), 425-445 (WLYS…TAFY), 543-563 (LFPI…GIPF), 602-622 (VLSV…YKPI), and 717-737 (SYLF…YLLF).

It belongs to the complex I subunit 5 family. In terms of assembly, NDH is composed of at least 16 different subunits, 5 of which are encoded in the nucleus.

It localises to the plastid. The protein localises to the chloroplast thylakoid membrane. It catalyses the reaction a plastoquinone + NADH + (n+1) H(+)(in) = a plastoquinol + NAD(+) + n H(+)(out). It carries out the reaction a plastoquinone + NADPH + (n+1) H(+)(in) = a plastoquinol + NADP(+) + n H(+)(out). Functionally, NDH shuttles electrons from NAD(P)H:plastoquinone, via FMN and iron-sulfur (Fe-S) centers, to quinones in the photosynthetic chain and possibly in a chloroplast respiratory chain. The immediate electron acceptor for the enzyme in this species is believed to be plastoquinone. Couples the redox reaction to proton translocation, and thus conserves the redox energy in a proton gradient. The chain is NAD(P)H-quinone oxidoreductase subunit 5, chloroplastic (ndhF) from Nicotiana sylvestris (Wood tobacco).